The primary structure comprises 459 residues: Methionine aminopeptidase 2-2 (459 aa).

Over residues 1-12 the composition is skewed to basic and acidic residues; the sequence is MGSKSPEDHRQG. The segment at 1-87 is disordered; the sequence is MGSKSPEDHR…KKLSVVQQTS (87 aa). Positions 43 to 54 are enriched in acidic residues; that stretch reads GQDEDGDDDDDE. The span at 55–66 shows a compositional bias: basic and acidic residues; that stretch reads KTGIDLKTNDGA. Positions 67 to 79 are enriched in basic residues; it reads KKKRKRNKKKSKK. His210 is a binding site for substrate. Residues Asp231, Asp242, and His311 each coordinate a divalent metal cation. Residue His319 participates in substrate binding. A divalent metal cation-binding residues include Glu344 and Glu440.

This sequence belongs to the peptidase M24A family. Methionine aminopeptidase eukaryotic type 2 subfamily. It depends on Co(2+) as a cofactor. Zn(2+) serves as cofactor. Mn(2+) is required as a cofactor. The cofactor is Fe(2+).

The protein resides in the cytoplasm. It catalyses the reaction Release of N-terminal amino acids, preferentially methionine, from peptides and arylamides.. Cotranslationally removes the N-terminal methionine from nascent proteins. The N-terminal methionine is often cleaved when the second residue in the primary sequence is small and uncharged (Met-Ala-, Cys, Gly, Pro, Ser, Thr, or Val). This is Methionine aminopeptidase 2-2 from Pyrenophora teres f. teres (strain 0-1) (Barley net blotch fungus).